The chain runs to 175 residues: NADH-quinone oxidoreductase subunit I (175 aa).

4Fe-4S ferredoxin-type domains are found at residues 69-98 (KRDEQGRERCTSCFCCMWICPADAIYIEAG) and 115-144 (KKFEIDLLRCIFCGMCEEACPKGAIYLDGP). Cys-78, Cys-81, Cys-84, Cys-88, Cys-124, Cys-127, Cys-130, and Cys-134 together coordinate [4Fe-4S] cluster.

It belongs to the complex I 23 kDa subunit family. In terms of assembly, NDH-1 is composed of 14 different subunits. Subunits NuoA, H, J, K, L, M, N constitute the membrane sector of the complex. Requires [4Fe-4S] cluster as cofactor.

Its subcellular location is the cell inner membrane. It catalyses the reaction a quinone + NADH + 5 H(+)(in) = a quinol + NAD(+) + 4 H(+)(out). In terms of biological role, NDH-1 shuttles electrons from NADH, via FMN and iron-sulfur (Fe-S) centers, to quinones in the respiratory chain. The immediate electron acceptor for the enzyme in this species is believed to be ubiquinone. Couples the redox reaction to proton translocation (for every two electrons transferred, four hydrogen ions are translocated across the cytoplasmic membrane), and thus conserves the redox energy in a proton gradient. The polypeptide is NADH-quinone oxidoreductase subunit I (Leptospira borgpetersenii serovar Hardjo-bovis (strain JB197)).